Here is a 365-residue protein sequence, read N- to C-terminus: Histidinol-phosphate aminotransferase (365 aa).

At Lys-223 the chain carries N6-(pyridoxal phosphate)lysine.

The protein belongs to the class-II pyridoxal-phosphate-dependent aminotransferase family. Histidinol-phosphate aminotransferase subfamily. Homodimer. The cofactor is pyridoxal 5'-phosphate.

The enzyme catalyses L-histidinol phosphate + 2-oxoglutarate = 3-(imidazol-4-yl)-2-oxopropyl phosphate + L-glutamate. The protein operates within amino-acid biosynthesis; L-histidine biosynthesis; L-histidine from 5-phospho-alpha-D-ribose 1-diphosphate: step 7/9. This is Histidinol-phosphate aminotransferase from Brucella abortus (strain 2308).